The sequence spans 585 residues: Arginine--tRNA ligase (585 aa).

The short motif at Pro127–His137 is the 'HIGH' region element.

It belongs to the class-I aminoacyl-tRNA synthetase family. In terms of assembly, monomer.

Its subcellular location is the cytoplasm. The catalysed reaction is tRNA(Arg) + L-arginine + ATP = L-arginyl-tRNA(Arg) + AMP + diphosphate. This is Arginine--tRNA ligase (argS) from Borreliella burgdorferi (strain ATCC 35210 / DSM 4680 / CIP 102532 / B31) (Borrelia burgdorferi).